Consider the following 325-residue polypeptide: Olfactory receptor 10AC1 (325 aa).

The Extracellular segment spans residues Met-1–Pro-26. N-linked (GlcNAc...) asparagine glycosylation occurs at Asn-6. The chain crosses the membrane as a helical span at residues Val-27 to Leu-47. Residues Val-48 to Gln-57 lie on the Cytoplasmic side of the membrane. A helical membrane pass occupies residues Pro-58–Val-78. The Extracellular portion of the chain corresponds to Pro-79–Cys-101. Residues Ala-102–Met-122 traverse the membrane as a helical segment. The Cytoplasmic portion of the chain corresponds to Ala-123–Arg-147. A helical membrane pass occupies residues Leu-148 to Phe-168. Over His-169 to Pro-171 the chain is Extracellular. Residues Phe-172–Ala-192 form a helical membrane-spanning segment. Residues Cys-193–Glu-200 are Cytoplasmic-facing. The chain crosses the membrane as a helical span at residues Leu-201–Ser-221. The Extracellular portion of the chain corresponds to Tyr-222 to Ser-243. Residues Thr-244–Val-264 traverse the membrane as a helical segment. Residues Arg-265–Leu-325 are Cytoplasmic-facing.

Belongs to the G-protein coupled receptor 1 family.

The protein localises to the cell membrane. Functionally, odorant receptor. This chain is Olfactory receptor 10AC1 (OR10AC1), found in Homo sapiens (Human).